Consider the following 467-residue polypeptide: Gamma-aminobutyric acid receptor subunit gamma-3 (467 aa).

Residues 1–17 (MAAKLLLLLCLFSGLHA) form the signal peptide. Topologically, residues 18 to 256 (RSRRVEEDEN…FELSRRMGYF (239 aa)) are extracellular. Residue Asn110 is glycosylated (N-linked (GlcNAc...) asparagine). A disulfide bridge links Cys171 with Cys185. N-linked (GlcNAc...) asparagine glycosylation occurs at Asn228. A helical transmembrane segment spans residues 257–277 (TIQTYIPCILTVVLSWVSFWI). Residues 278-283 (KKDATP) lie on the Cytoplasmic side of the membrane. A helical transmembrane segment spans residues 284-303 (ARTTLGITTVLTMTTLSTIA). The Extracellular segment spans residues 304 to 311 (RKSLPRVS). A helical membrane pass occupies residues 312-332 (YVTAMDLFVTVCFLFVFAALM). The Cytoplasmic segment spans residues 333–446 (EYATLNYYSS…DVSELDSYSR (114 aa)). A helical membrane pass occupies residues 447–467 (VFFPTSFLLFNLVYWVGYLYL).

It belongs to the ligand-gated ion channel (TC 1.A.9) family. Gamma-aminobutyric acid receptor (TC 1.A.9.5) subfamily. GABRG3 sub-subfamily. Heteropentamer, formed by a combination of alpha (GABRA1-6), beta (GABRB1-3), gamma (GABRG1-3), delta (GABRD), epsilon (GABRE), rho (GABRR1-3), pi (GABRP) and theta (GABRQ) chains, each subunit exhibiting distinct physiological and pharmacological properties. In terms of processing, may be palmitoylated. As to expression, expressed in brain.

It localises to the postsynaptic cell membrane. Its subcellular location is the cell membrane. The enzyme catalyses chloride(in) = chloride(out). Its function is as follows. Gamma subunit of the heteropentameric ligand-gated chloride channel gated by gamma-aminobutyric acid (GABA), a major inhibitory neurotransmitter in the brain. GABA-gated chloride channels, also named GABA(A) receptors (GABAAR), consist of five subunits arranged around a central pore and contain GABA active binding site(s) located at the alpha and beta subunit interface(s). When activated by GABA, GABAARs selectively allow the flow of chloride across the cell membrane down their electrochemical gradient. The protein is Gamma-aminobutyric acid receptor subunit gamma-3 of Mus musculus (Mouse).